A 1337-amino-acid chain; its full sequence is Multidrug resistance protein fer6 (1337 aa).

An N-terminal signal peptide occupies residues 1–23 (MTPEASANWFSLCWFAWIDPILT). Asn71 carries an N-linked (GlcNAc...) asparagine glycan. Transmembrane regions (helical) follow at residues 94 to 114 (FWIG…SPLL) and 138 to 158 (LGSG…CVFL). In terms of domain architecture, ABC transmembrane type-1 1 spans 95-386 (WIGGLLKLLA…LPIAWNAIVD (292 aa)). Asn187 carries N-linked (GlcNAc...) asparagine glycosylation. A run of 4 helical transmembrane segments spans residues 220-242 (FFHM…IWSL), 247-269 (LPGI…RLFA), 331-351 (ALAF…YALV), and 359-379 (ILFS…FLPI). The ABC transporter 1 domain occupies 417 to 667 (IQLEDASFTW…KGRVAELLLT (251 aa)). The disordered stretch occupies residues 432–460 (ADTAKPVNEKKGQDSPSNEKETPVDRAST). The segment covering 438 to 455 (VNEKKGQDSPSNEKETPV) has biased composition (basic and acidic residues). Asn465 is a glycosylation site (N-linked (GlcNAc...) asparagine). Position 478–485 (478–485 (GGVGSGKS)) interacts with ATP. Residues 699-751 (GSASNRNSEASESTTTTVNAESKDTSNAEGVTNKTEKKDLVAPPAQAKSKALM) are disordered. The span at 700–718 (SASNRNSEASESTTTTVNA) shows a compositional bias: low complexity. N-linked (GlcNAc...) asparagine glycosylation occurs at Asn731. A run of 6 helical transmembrane segments spans residues 769–789 (YLNA…VLVF), 817–837 (GIYA…GVIF), 890–909 (AMRT…VLIA), 915–933 (FLIP…AAYY), 999–1019 (LSVR…ILVV), and 1028–1048 (GETG…GWMI). The region spanning 781 to 1056 (LFLVAVLVFQ…MIRHAAELEN (276 aa)) is the ABC transmembrane type-1 2 domain. N-linked (GlcNAc...) asparagine glycosylation is present at Asn1057. The 229-residue stretch at 1097-1325 (IRFEGVEAKY…EKGAFRALCD (229 aa)) folds into the ABC transporter 2 domain. ATP is bound at residue 1131–1138 (GRTGAGKS). A glycan (N-linked (GlcNAc...) asparagine) is linked at Asn1227.

It belongs to the ABC transporter superfamily. ABCC family. Conjugate transporter (TC 3.A.1.208) subfamily.

The protein resides in the membrane. Multidrug resistance protein; part of the gene cluster that mediates the biosynthesis of siderophore ferrichrome A which is contributing to organismal virulence. This chain is Multidrug resistance protein fer6, found in Mycosarcoma maydis (Corn smut fungus).